A 234-amino-acid polypeptide reads, in one-letter code: UPF0173 metal-dependent hydrolase Rleg2_1519 (234 aa).

It belongs to the UPF0173 family.

In Rhizobium leguminosarum bv. trifolii (strain WSM2304), this protein is UPF0173 metal-dependent hydrolase Rleg2_1519.